Consider the following 138-residue polypeptide: Sporulation-specific protein 13 (138 aa).

Over residues 1–11 (MMSNSQISKLF) the composition is skewed to polar residues. The segment at 1-31 (MMSNSQISKLFSSISNKENSNENALKESTNK) is disordered. Residues 12 to 23 (SSISNKENSNEN) are compositionally biased toward low complexity. A coiled-coil region spans residues 16–104 (NKENSNENAL…KRELDYLRAK (89 aa)).

As to quaternary structure, interacts with spo2.

The protein resides in the cytoplasm. The protein localises to the cytoskeleton. It localises to the microtubule organizing center. Its subcellular location is the spindle pole body. Its function is as follows. Involved in sporulation. Plays a significant role in modification of the spindle pole body prior to spore formation and is required for initiating forespore membrane formation. This Schizosaccharomyces pombe (strain 972 / ATCC 24843) (Fission yeast) protein is Sporulation-specific protein 13 (spo13).